Reading from the N-terminus, the 209-residue chain is Ribosomal RNA large subunit methyltransferase E (209 aa).

5 residues coordinate S-adenosyl-L-methionine: G63, W65, D83, D99, and D124. Residue K164 is the Proton acceptor of the active site.

The protein belongs to the class I-like SAM-binding methyltransferase superfamily. RNA methyltransferase RlmE family.

The protein localises to the cytoplasm. It catalyses the reaction uridine(2552) in 23S rRNA + S-adenosyl-L-methionine = 2'-O-methyluridine(2552) in 23S rRNA + S-adenosyl-L-homocysteine + H(+). In terms of biological role, specifically methylates the uridine in position 2552 of 23S rRNA at the 2'-O position of the ribose in the fully assembled 50S ribosomal subunit. The chain is Ribosomal RNA large subunit methyltransferase E from Aliivibrio fischeri (strain ATCC 700601 / ES114) (Vibrio fischeri).